Consider the following 648-residue polypeptide: Macrolide export ATP-binding/permease protein MacB (648 aa).

In terms of domain architecture, ABC transporter spans 5–243; the sequence is LELKDIRRSY…AGGTEPVVNT (239 aa). 41-48 is a binding site for ATP; that stretch reads GASGSGKS. Transmembrane regions (helical) follow at residues 273–293, 523–543, 576–596, and 600–620; these read LLTMLGIIIGIASVVSIVVVG, LFLTLVAVISLVVGGIGVMNI, AVLVCLVGGALGITLSLLIAF, and LFLPGWEIGFSPLALLLAFLC.

It belongs to the ABC transporter superfamily. Macrolide exporter (TC 3.A.1.122) family. In terms of assembly, homodimer. Part of the tripartite efflux system MacAB-TolC, which is composed of an inner membrane transporter, MacB, a periplasmic membrane fusion protein, MacA, and an outer membrane component, TolC. The complex forms a large protein conduit and can translocate molecules across both the inner and outer membranes. Interacts with MacA.

Its subcellular location is the cell inner membrane. Part of the tripartite efflux system MacAB-TolC. MacB is a non-canonical ABC transporter that contains transmembrane domains (TMD), which form a pore in the inner membrane, and an ATP-binding domain (NBD), which is responsible for energy generation. Confers resistance against macrolides. The polypeptide is Macrolide export ATP-binding/permease protein MacB (Shigella boydii serotype 4 (strain Sb227)).